The primary structure comprises 283 residues: Pantothenate synthetase (283 aa).

30–37 is an ATP binding site; the sequence is MGNLHDGH. Catalysis depends on His37, which acts as the Proton donor. A (R)-pantoate-binding site is contributed by Gln61. A beta-alanine-binding site is contributed by Gln61. ATP is bound at residue 149–152; the sequence is GEKD. (R)-pantoate is bound at residue Gln155. 186 to 189 is a binding site for ATP; sequence LSSR.

The protein belongs to the pantothenate synthetase family. Homodimer.

Its subcellular location is the cytoplasm. It catalyses the reaction (R)-pantoate + beta-alanine + ATP = (R)-pantothenate + AMP + diphosphate + H(+). It functions in the pathway cofactor biosynthesis; (R)-pantothenate biosynthesis; (R)-pantothenate from (R)-pantoate and beta-alanine: step 1/1. In terms of biological role, catalyzes the condensation of pantoate with beta-alanine in an ATP-dependent reaction via a pantoyl-adenylate intermediate. The sequence is that of Pantothenate synthetase from Escherichia coli O6:H1 (strain CFT073 / ATCC 700928 / UPEC).